Here is a 32-residue protein sequence, read N- to C-terminus: MAWTKPIIREIECGMEINMYGPDSDEEREVLF.

Residues 16-20 constitute a cross-link (pyrroloquinoline quinone (Glu-Tyr)); that stretch reads EINMY.

It belongs to the PqqA family.

It functions in the pathway cofactor biosynthesis; pyrroloquinoline quinone biosynthesis. In terms of biological role, required for coenzyme pyrroloquinoline quinone (PQQ) biosynthesis. PQQ is probably formed by cross-linking a specific glutamate to a specific tyrosine residue and excising these residues from the peptide. In Dinoroseobacter shibae (strain DSM 16493 / NCIMB 14021 / DFL 12), this protein is Coenzyme PQQ synthesis protein A.